The primary structure comprises 277 residues: MKSFTFLILFLFAAQSISVYAGSFHKDVKIHWGDGRGKIHDNQGKLLSLSLDKSSGSGFQSNQEFLYGKAEVQMKLVPGNSAGTVTTFYLKSPGTTWDEIDFEFLGNISGHPYTLHTNVYTKGSGDKEQQFHLWFDPTANFHTYCITWNPQRIIFTVDGIPIREFMNAESRGVPFPTKQPMRLYASLWEAEHWATRGGLEKTDWSKAPFTAYYRNYNVEGCVWVNGKSVCPANSQWFTQKLDSNGQTRMKGVQSKYMVYNYCSDKKRFPRGVPPECS.

Positions methionine 1–alanine 21 are cleaved as a signal peptide. The GH16 domain maps to glycine 22–tyrosine 213. Glutamate 99 (nucleophile) is an active-site residue. Glutamate 103 acts as the Proton donor in catalysis. Glutamate 103 lines the xyloglucan pocket. An N-linked (GlcNAc...) asparagine glycan is attached at asparagine 107. Residues histidine 116 to asparagine 118, aspartate 126 to glutamate 128, histidine 192 to tryptophan 193, and glycine 197 contribute to the xyloglucan site. 2 cysteine pairs are disulfide-bonded: cysteine 221–cysteine 230 and cysteine 262–cysteine 276. Arginine 267 lines the xyloglucan pocket.

This sequence belongs to the glycosyl hydrolase 16 family. XTH group 2 subfamily. Contains at least one intrachain disulfide bond essential for its enzymatic activity. In terms of tissue distribution, root specific.

It is found in the secreted. It localises to the cell wall. The protein resides in the extracellular space. Its subcellular location is the apoplast. The enzyme catalyses breaks a beta-(1-&gt;4) bond in the backbone of a xyloglucan and transfers the xyloglucanyl segment on to O-4 of the non-reducing terminal glucose residue of an acceptor, which can be a xyloglucan or an oligosaccharide of xyloglucan.. Functionally, possesses xyloglucan endotransglucosylase (XET) activity in vitro. Does not possess xyloglucan endohydrolysis (XEH) activity. Cleaves and religates xyloglucan polymers, an essential constituent of the primary cell wall, and thereby participates in cell wall construction of growing tissues. Involved in cell proliferation in the tissue reunion process of wounded inflorescence stems. Maybe a downstream target of NAC071 as a consequence of auxin action in wounded stems. The protein is Xyloglucan endotransglucosylase/hydrolase protein 19 of Arabidopsis thaliana (Mouse-ear cress).